The sequence spans 352 residues: N-acetyl-gamma-glutamyl-phosphate reductase (352 aa).

Residue cysteine 155 is part of the active site.

The protein belongs to the NAGSA dehydrogenase family. Type 1 subfamily.

The protein localises to the cytoplasm. The catalysed reaction is N-acetyl-L-glutamate 5-semialdehyde + phosphate + NADP(+) = N-acetyl-L-glutamyl 5-phosphate + NADPH + H(+). It participates in amino-acid biosynthesis; L-arginine biosynthesis; N(2)-acetyl-L-ornithine from L-glutamate: step 3/4. Its function is as follows. Catalyzes the NADPH-dependent reduction of N-acetyl-5-glutamyl phosphate to yield N-acetyl-L-glutamate 5-semialdehyde. The protein is N-acetyl-gamma-glutamyl-phosphate reductase of Acaryochloris marina (strain MBIC 11017).